Consider the following 263-residue polypeptide: Alpha-tubulin N-acetyltransferase 2 (263 aa).

In terms of domain architecture, N-acetyltransferase spans 1-181 (MEIAFDLSTI…NKYALCSNFF (181 aa)). 115 to 128 (FFVVPTEQRSGNGF) is an acetyl-CoA binding site. 2 disordered regions span residues 191–223 (TPRQ…NRPR) and 242–263 (EVDP…RRIW). The span at 200-212 (RASSAVSSHASSR) shows a compositional bias: low complexity. A compositionally biased stretch (basic and acidic residues) spans 253 to 263 (NARDFGHRRIW).

Belongs to the acetyltransferase ATAT1 family. Expressed in touch receptor neurons and in a subset of ciliated neurons, including PDE, ADE, CEP, and OLQ neurons.

It carries out the reaction L-lysyl-[alpha-tubulin] + acetyl-CoA = N(6)-acetyl-L-lysyl-[alpha-tubulin] + CoA + H(+). Its function is as follows. Specifically acetylates 'Lys-40' in alpha-tubulin/mec-12 on the lumenal side of microtubules. Promotes microtubule destabilization and accelerates microtubule dynamics; this activity may be independent of acetylation activity. Acetylates alpha-tubulin with a slow enzymatic rate, due to a catalytic site that is not optimized for acetyl transfer. Enters the microtubule through each end and diffuses quickly throughout the lumen of microtubules. Acetylates only long/old microtubules because of its slow acetylation rate since it does not have time to act on dynamically unstable microtubules before the enzyme is released. Required for the maintenance of touch receptor neurons and possibly other type of neurons involved in locomotion. The protein is Alpha-tubulin N-acetyltransferase 2 (atat-2) of Caenorhabditis elegans.